The sequence spans 318 residues: D-alanine--D-alanine ligase (318 aa).

The ATP-grasp domain maps to 117 to 315 (KQVWLSLGLS…FETLVWRVLE (199 aa)). 146-201 (ARQIGLPIIVKPANEGSSVGVSRVFDQAQLEEAVTLAARYDGALLMEQLIEGDELT) serves as a coordination point for ATP. D268, E282, and N284 together coordinate Mg(2+).

This sequence belongs to the D-alanine--D-alanine ligase family. Mg(2+) is required as a cofactor. Mn(2+) serves as cofactor.

The protein resides in the cytoplasm. The enzyme catalyses 2 D-alanine + ATP = D-alanyl-D-alanine + ADP + phosphate + H(+). It participates in cell wall biogenesis; peptidoglycan biosynthesis. In terms of biological role, cell wall formation. This is D-alanine--D-alanine ligase from Xanthomonas axonopodis pv. citri (strain 306).